The primary structure comprises 651 residues: Acetyl-coenzyme A synthetase (651 aa).

CoA is bound by residues 193–196, Thr-313, and Asn-337; that span reads RAGR. ATP-binding positions include 389-391, 413-418, Asp-502, and Arg-517; these read GEP and DTWWQT. Residue Ser-525 coordinates CoA. Arg-528 provides a ligand contact to ATP. Val-539, His-541, and Val-544 together coordinate Mg(2+). CoA is bound at residue Arg-586. Lys-611 bears the N6-acetyllysine mark.

Belongs to the ATP-dependent AMP-binding enzyme family. Mg(2+) serves as cofactor. Acetylated. Deacetylation by the SIR2-homolog deacetylase activates the enzyme.

It carries out the reaction acetate + ATP + CoA = acetyl-CoA + AMP + diphosphate. Functionally, catalyzes the conversion of acetate into acetyl-CoA (AcCoA), an essential intermediate at the junction of anabolic and catabolic pathways. AcsA undergoes a two-step reaction. In the first half reaction, AcsA combines acetate with ATP to form acetyl-adenylate (AcAMP) intermediate. In the second half reaction, it can then transfer the acetyl group from AcAMP to the sulfhydryl group of CoA, forming the product AcCoA. The chain is Acetyl-coenzyme A synthetase from Shewanella denitrificans (strain OS217 / ATCC BAA-1090 / DSM 15013).